The sequence spans 573 residues: 2-succinyl-5-enolpyruvyl-6-hydroxy-3-cyclohexene-1-carboxylate synthase (573 aa).

It belongs to the TPP enzyme family. MenD subfamily. Homodimer. The cofactor is Mg(2+). Mn(2+) serves as cofactor. Requires thiamine diphosphate as cofactor.

It carries out the reaction isochorismate + 2-oxoglutarate + H(+) = 5-enolpyruvoyl-6-hydroxy-2-succinyl-cyclohex-3-ene-1-carboxylate + CO2. The protein operates within quinol/quinone metabolism; 1,4-dihydroxy-2-naphthoate biosynthesis; 1,4-dihydroxy-2-naphthoate from chorismate: step 2/7. It participates in quinol/quinone metabolism; menaquinone biosynthesis. In terms of biological role, catalyzes the thiamine diphosphate-dependent decarboxylation of 2-oxoglutarate and the subsequent addition of the resulting succinic semialdehyde-thiamine pyrophosphate anion to isochorismate to yield 2-succinyl-5-enolpyruvyl-6-hydroxy-3-cyclohexene-1-carboxylate (SEPHCHC). The sequence is that of 2-succinyl-5-enolpyruvyl-6-hydroxy-3-cyclohexene-1-carboxylate synthase from Shewanella oneidensis (strain ATCC 700550 / JCM 31522 / CIP 106686 / LMG 19005 / NCIMB 14063 / MR-1).